A 342-amino-acid polypeptide reads, in one-letter code: Ketol-acid reductoisomerase (NADP(+)) (342 aa).

The KARI N-terminal Rossmann domain occupies 2–182 (AEIYYDNDAD…GGLRAGGIKT (181 aa)). Residues 25 to 28 (YGSQ), lysine 48, serine 51, serine 53, and 83 to 86 (DQVQ) contribute to the NADP(+) site. Histidine 108 is a catalytic residue. An NADP(+)-binding site is contributed by glycine 134. One can recognise a KARI C-terminal knotted domain in the interval 183–328 (TFTEETETDL…RELRKLFAWN (146 aa)). The Mg(2+) site is built by aspartate 191, glutamate 195, glutamate 227, and glutamate 231. Serine 252 serves as a coordination point for substrate.

The protein belongs to the ketol-acid reductoisomerase family. Requires Mg(2+) as cofactor.

The catalysed reaction is (2R)-2,3-dihydroxy-3-methylbutanoate + NADP(+) = (2S)-2-acetolactate + NADPH + H(+). It catalyses the reaction (2R,3R)-2,3-dihydroxy-3-methylpentanoate + NADP(+) = (S)-2-ethyl-2-hydroxy-3-oxobutanoate + NADPH + H(+). It participates in amino-acid biosynthesis; L-isoleucine biosynthesis; L-isoleucine from 2-oxobutanoate: step 2/4. The protein operates within amino-acid biosynthesis; L-valine biosynthesis; L-valine from pyruvate: step 2/4. Its function is as follows. Involved in the biosynthesis of branched-chain amino acids (BCAA). Catalyzes an alkyl-migration followed by a ketol-acid reduction of (S)-2-acetolactate (S2AL) to yield (R)-2,3-dihydroxy-isovalerate. In the isomerase reaction, S2AL is rearranged via a Mg-dependent methyl migration to produce 3-hydroxy-3-methyl-2-ketobutyrate (HMKB). In the reductase reaction, this 2-ketoacid undergoes a metal-dependent reduction by NADPH to yield (R)-2,3-dihydroxy-isovalerate. In Leifsonia xyli subsp. xyli (strain CTCB07), this protein is Ketol-acid reductoisomerase (NADP(+)).